A 199-amino-acid polypeptide reads, in one-letter code: CASP-like protein 4B1 (199 aa).

Residues 1–32 (MAMVASPDDIVKSPLPPPPPPPPPPLPPAHKD) form a disordered region. The Cytoplasmic portion of the chain corresponds to 1–53 (MAMVASPDDIVKSPLPPPPPPPPPPLPPAHKDKAAYNPYSGCPAHGGDDGLDG). The segment covering 14–28 (PLPPPPPPPPPPLPP) has biased composition (pro residues). The helical transmembrane segment at 54-74 (IVLVLRAAAALLALVAMALVA) threads the bilayer. At 75 to 91 (SCRHGDWMEFTRYQEYR) the chain is on the extracellular side. The helical transmembrane segment at 92–112 (YLLGVAVVASLYSALQAARTF) threads the bilayer. The Cytoplasmic segment spans residues 113-127 (RRMRAGTAYAATFLD). The helical transmembrane segment at 128 to 148 (FAGDQAVGYLLITASSAALPI) threads the bilayer. The Extracellular segment spans residues 149–163 (TIRMRSAVVNTFTDV). Residues 164–184 (VAASISFAFLAFAALAFSALI) traverse the membrane as a helical segment. Residues 185–199 (AGFRLSSSSSSAYNY) are Cytoplasmic-facing.

It belongs to the Casparian strip membrane proteins (CASP) family. In terms of assembly, homodimer and heterodimers.

It localises to the cell membrane. In Oryza sativa subsp. japonica (Rice), this protein is CASP-like protein 4B1.